Here is a 612-residue protein sequence, read N- to C-terminus: Dihydroxy-acid dehydratase (612 aa).

Asp-81 contributes to the Mg(2+) binding site. A [2Fe-2S] cluster-binding site is contributed by Cys-122. Asp-123 and Lys-124 together coordinate Mg(2+). The residue at position 124 (Lys-124) is an N6-carboxylysine. Residue Cys-195 coordinates [2Fe-2S] cluster. Glu-491 is a binding site for Mg(2+). The active-site Proton acceptor is the Ser-517.

This sequence belongs to the IlvD/Edd family. Homodimer. [2Fe-2S] cluster is required as a cofactor. The cofactor is Mg(2+).

The enzyme catalyses (2R)-2,3-dihydroxy-3-methylbutanoate = 3-methyl-2-oxobutanoate + H2O. It catalyses the reaction (2R,3R)-2,3-dihydroxy-3-methylpentanoate = (S)-3-methyl-2-oxopentanoate + H2O. Its pathway is amino-acid biosynthesis; L-isoleucine biosynthesis; L-isoleucine from 2-oxobutanoate: step 3/4. The protein operates within amino-acid biosynthesis; L-valine biosynthesis; L-valine from pyruvate: step 3/4. Functionally, functions in the biosynthesis of branched-chain amino acids. Catalyzes the dehydration of (2R,3R)-2,3-dihydroxy-3-methylpentanoate (2,3-dihydroxy-3-methylvalerate) into 2-oxo-3-methylpentanoate (2-oxo-3-methylvalerate) and of (2R)-2,3-dihydroxy-3-methylbutanoate (2,3-dihydroxyisovalerate) into 2-oxo-3-methylbutanoate (2-oxoisovalerate), the penultimate precursor to L-isoleucine and L-valine, respectively. The sequence is that of Dihydroxy-acid dehydratase from Sinorhizobium fredii (strain NBRC 101917 / NGR234).